Here is a 403-residue protein sequence, read N- to C-terminus: Octaketide synthase 2 (403 aa).

Cysteine 174 is a catalytic residue. CoA-binding positions include serine 281 and 318–321 (GGRA).

The protein belongs to the thiolase-like superfamily. Chalcone/stilbene synthases family. Homodimer.

Its pathway is secondary metabolite biosynthesis; flavonoid biosynthesis. Its function is as follows. Catalyzes the iterative condensations of 8 molecules of malonyl-CoA to produce aromatic octaketides, SEK4 and SEK4b, the products of the minimal polyketide synthase for the benzoisochromanequinone actinorhodin. May be involved in the biosynthesis of the octaketide barbaloin. The polypeptide is Octaketide synthase 2 (PKS4) (Aloe arborescens (Kidachi aloe)).